A 397-amino-acid polypeptide reads, in one-letter code: Lysophospholipid transporter LplT (397 aa).

The Periplasmic segment spans residues 1 to 17 (MSESVHTNTSLWSKGMK). The helical transmembrane segment at 18-38 (AVIVAQFLSAFGDNALLFATL) threads the bilayer. Over 39-52 (ALLKAQFYPEWSQP) the chain is Cytoplasmic. The helical transmembrane segment at 53 to 73 (ILQMVFVGAYILFAPFVGQVA) threads the bilayer. Residues 74-90 (DSFAKGRVMMFANGLKL) are Periplasmic-facing. The helical transmembrane segment at 91–111 (LGAASICFGINPFLGYTLVGV) threads the bilayer. The Cytoplasmic portion of the chain corresponds to 112-144 (GAAAYSPAKYGILGELTTGSKLVKANGLMEAST). A helical transmembrane segment spans residues 145–165 (IAAILLGSVAGGVLADWHVLV). Ala166 is a topological domain (periplasmic). A helical transmembrane segment spans residues 167–187 (LAACALAYGGAVVANIYIPKL). At 188–226 (AAARPGQSWNLINMTRSFLNACTSLWRNGETRFSLVGTS) the chain is on the cytoplasmic side. The chain crosses the membrane as a helical span at residues 227–247 (LFWGAGVTLRFLLVLWVPVAL). Residues 248–256 (GITDNSTPT) lie on the Periplasmic side of the membrane. A helical transmembrane segment spans residues 257-277 (YLNAMVAIGIVVGAGAAAKLV). The Cytoplasmic segment spans residues 278 to 280 (TLE). A helical membrane pass occupies residues 281–301 (TVSRCMPAGILIGVVVLIFSL). At 302–304 (QHE) the chain is on the periplasmic side. The chain crosses the membrane as a helical span at residues 305-325 (LLPAYALLMLIGVMGGFFVVP). The Cytoplasmic portion of the chain corresponds to 326–343 (LNALLQERGKKSVGAGNA). A helical transmembrane segment spans residues 344 to 364 (IAVQNLGENSAMLLMLGIYSL). At 365-366 (AV) the chain is on the periplasmic side. A helical transmembrane segment spans residues 367–387 (MVGIPVVPIGIGFGALFALAI). At 388-397 (TALWIWQRRH) the chain is on the cytoplasmic side.

The protein belongs to the major facilitator superfamily. LplT (TC 2.A.1.42) family.

The protein localises to the cell inner membrane. In terms of biological role, catalyzes the facilitated diffusion of 2-acyl-glycero-3-phosphoethanolamine (2-acyl-GPE) into the cell. The sequence is that of Lysophospholipid transporter LplT from Shigella boydii serotype 4 (strain Sb227).